The sequence spans 491 residues: Ketol-acid reductoisomerase (NADP(+)) (491 aa).

One can recognise a KARI N-terminal Rossmann domain in the interval 15–208 (AQLGKCRFMA…GGHRAGVLES (194 aa)). NADP(+)-binding positions include 45 to 48 (CGAQ), Arg-68, Arg-76, Ser-78, and 108 to 110 (DKQ). The active site involves His-132. Residue Gly-158 participates in NADP(+) binding. 2 KARI C-terminal knotted domains span residues 209-344 (SFVA…TAPQ) and 345-484 (YEGK…MTDM). Positions 217, 221, 389, and 393 each coordinate Mg(2+). A substrate-binding site is contributed by Ser-414.

Belongs to the ketol-acid reductoisomerase family. Mg(2+) serves as cofactor.

It catalyses the reaction (2R)-2,3-dihydroxy-3-methylbutanoate + NADP(+) = (2S)-2-acetolactate + NADPH + H(+). The enzyme catalyses (2R,3R)-2,3-dihydroxy-3-methylpentanoate + NADP(+) = (S)-2-ethyl-2-hydroxy-3-oxobutanoate + NADPH + H(+). The protein operates within amino-acid biosynthesis; L-isoleucine biosynthesis; L-isoleucine from 2-oxobutanoate: step 2/4. It functions in the pathway amino-acid biosynthesis; L-valine biosynthesis; L-valine from pyruvate: step 2/4. Involved in the biosynthesis of branched-chain amino acids (BCAA). Catalyzes an alkyl-migration followed by a ketol-acid reduction of (S)-2-acetolactate (S2AL) to yield (R)-2,3-dihydroxy-isovalerate. In the isomerase reaction, S2AL is rearranged via a Mg-dependent methyl migration to produce 3-hydroxy-3-methyl-2-ketobutyrate (HMKB). In the reductase reaction, this 2-ketoacid undergoes a metal-dependent reduction by NADPH to yield (R)-2,3-dihydroxy-isovalerate. The protein is Ketol-acid reductoisomerase (NADP(+)) of Klebsiella pneumoniae subsp. pneumoniae (strain ATCC 700721 / MGH 78578).